Here is a 414-residue protein sequence, read N- to C-terminus: Esterase FrsA (414 aa).

The protein belongs to the FrsA family.

The enzyme catalyses a carboxylic ester + H2O = an alcohol + a carboxylate + H(+). Its function is as follows. Catalyzes the hydrolysis of esters. The sequence is that of Esterase FrsA from Shigella flexneri serotype 5b (strain 8401).